The sequence spans 560 residues: DNA ligase B (560 aa).

Residue K124 is the N6-AMP-lysine intermediate of the active site.

It belongs to the NAD-dependent DNA ligase family. LigB subfamily.

The catalysed reaction is NAD(+) + (deoxyribonucleotide)n-3'-hydroxyl + 5'-phospho-(deoxyribonucleotide)m = (deoxyribonucleotide)n+m + AMP + beta-nicotinamide D-nucleotide.. Functionally, catalyzes the formation of phosphodiester linkages between 5'-phosphoryl and 3'-hydroxyl groups in double-stranded DNA using NAD as a coenzyme and as the energy source for the reaction. This chain is DNA ligase B, found in Escherichia coli O17:K52:H18 (strain UMN026 / ExPEC).